Consider the following 264-residue polypeptide: Somatomedin-B and thrombospondin type-1 domain-containing protein (264 aa).

An N-terminal signal peptide occupies residues 1–20 (MKTLWMVLCALARLWPGALA). Residues 24–75 (EAGRCCPGRDPACFARGWRLDRVYGTCFCDQACRLTGDCCFDYDRACPARPC) enclose the SMB domain. 7 disulfide bridges follow: Cys28-Cys36, Cys28-Cys52, Cys36-Cys70, Cys50-Cys52, Cys50-Cys63, Cys56-Cys62, and Cys63-Cys70. Residues 74–125 (PCFVGEWSPWSGCAGQCQPTTRVRRRSVRQEPLNGGAPCPPLEERAGCLEYS) form the TSP type-1 domain. Asn227 carries an N-linked (GlcNAc...) asparagine glycan.

It belongs to the thrombospondin family.

The protein resides in the secreted. It localises to the extracellular space. It is found in the extracellular matrix. The polypeptide is Somatomedin-B and thrombospondin type-1 domain-containing protein (Sbspon) (Mus musculus (Mouse)).